The primary structure comprises 595 residues: Aspartate--tRNA ligase (595 aa).

An L-aspartate-binding site is contributed by glutamate 173. Positions 197 to 200 are aspartate; that stretch reads QLFK. Position 219 (arginine 219) interacts with L-aspartate. ATP-binding positions include 219 to 221 and glutamine 228; that span reads RDE. Histidine 449 contacts L-aspartate. Glutamate 483 contacts ATP. Arginine 490 is an L-aspartate binding site. 535-538 is an ATP binding site; the sequence is GLDR.

Belongs to the class-II aminoacyl-tRNA synthetase family. Type 1 subfamily. In terms of assembly, homodimer.

The protein resides in the cytoplasm. It catalyses the reaction tRNA(Asp) + L-aspartate + ATP = L-aspartyl-tRNA(Asp) + AMP + diphosphate. Functionally, catalyzes the attachment of L-aspartate to tRNA(Asp) in a two-step reaction: L-aspartate is first activated by ATP to form Asp-AMP and then transferred to the acceptor end of tRNA(Asp). This Shewanella woodyi (strain ATCC 51908 / MS32) protein is Aspartate--tRNA ligase.